The sequence spans 250 residues: Indole-3-glycerol phosphate synthase (250 aa).

Belongs to the TrpC family.

It carries out the reaction 1-(2-carboxyphenylamino)-1-deoxy-D-ribulose 5-phosphate + H(+) = (1S,2R)-1-C-(indol-3-yl)glycerol 3-phosphate + CO2 + H2O. It functions in the pathway amino-acid biosynthesis; L-tryptophan biosynthesis; L-tryptophan from chorismate: step 4/5. This Picrophilus torridus (strain ATCC 700027 / DSM 9790 / JCM 10055 / NBRC 100828 / KAW 2/3) protein is Indole-3-glycerol phosphate synthase.